Consider the following 81-residue polypeptide: Photosystem I iron-sulfur center (81 aa).

4Fe-4S ferredoxin-type domains lie at 2–31 and 39–68; these read AHSV…MVPW and IASA…VRVY. Residues Cys-11, Cys-14, Cys-17, Cys-21, Cys-48, Cys-51, Cys-54, and Cys-58 each contribute to the [4Fe-4S] cluster site.

In terms of assembly, the eukaryotic PSI reaction center is composed of at least 11 subunits. It depends on [4Fe-4S] cluster as a cofactor.

It is found in the plastid. It localises to the chloroplast thylakoid membrane. The enzyme catalyses reduced [plastocyanin] + hnu + oxidized [2Fe-2S]-[ferredoxin] = oxidized [plastocyanin] + reduced [2Fe-2S]-[ferredoxin]. Functionally, apoprotein for the two 4Fe-4S centers FA and FB of photosystem I (PSI); essential for photochemical activity. FB is the terminal electron acceptor of PSI, donating electrons to ferredoxin. The C-terminus interacts with PsaA/B/D and helps assemble the protein into the PSI complex. Required for binding of PsaD and PsaE to PSI. PSI is a plastocyanin/cytochrome c6-ferredoxin oxidoreductase, converting photonic excitation into a charge separation, which transfers an electron from the donor P700 chlorophyll pair to the spectroscopically characterized acceptors A0, A1, FX, FA and FB in turn. The protein is Photosystem I iron-sulfur center of Pyropia yezoensis (Susabi-nori).